The following is a 305-amino-acid chain: Syntaxin-112 (305 aa).

Met1 carries the post-translational modification N-acetylmethionine. Positions 52 to 119 form a coiled coil; sequence QEIETIKTLI…TLIETLEKRN (68 aa). The region spanning 210-272 is the t-SNARE coiled-coil homology domain; sequence DLKTKERHEA…SGGTNSLYYA (63 aa).

The protein belongs to the syntaxin family. Part of the t-SNARE complex.

Its function is as follows. Vesicle trafficking protein that functions in the secretory pathway. This is Syntaxin-112 (SYP112) from Arabidopsis thaliana (Mouse-ear cress).